The primary structure comprises 505 residues: Lysine--tRNA ligase (505 aa).

The Mg(2+) site is built by glutamate 415 and glutamate 422.

It belongs to the class-II aminoacyl-tRNA synthetase family. As to quaternary structure, homodimer. Mg(2+) serves as cofactor.

Its subcellular location is the cytoplasm. The catalysed reaction is tRNA(Lys) + L-lysine + ATP = L-lysyl-tRNA(Lys) + AMP + diphosphate. This is Lysine--tRNA ligase from Salmonella typhi.